The chain runs to 392 residues: Copper-containing nitrite reductase (392 aa).

An N-terminal signal peptide occupies residues 1-18 (MKRQALAAMIASLFALAA). C19 carries the N-palmitoyl cysteine lipid modification. C19 carries S-diacylglycerol cysteine lipidation. The tract at residues 30–49 (ETPAASAEAASSAAQATAET) is disordered. 2 consecutive Plastocyanin-like domains span residues 101 to 195 (WTFD…ILVE) and 245 to 346 (GHVG…LKVE). H134, H139, H174, C175, H183, and M188 together coordinate Cu cation. Position 139 (H139) interacts with substrate. H280 is a binding site for substrate. Cu cation is bound at residue H329. The interval 367-392 (GAASAPAASAPAASAPAASASEKSVY) is disordered. Repeat copies occupy residues 368-372 (AASAP), 373-377 (AASAP), 378-382 (AASAP), and 383-387 (AASAS). Residues 368-387 (AASAPAASAPAASAPAASAS) are 4 X 5 AA tandem repeats of A-A-S-A-P.

Belongs to the multicopper oxidase family. Homotrimer. It depends on Cu(+) as a cofactor. Cu(2+) serves as cofactor. In terms of processing, palmitoylated.

Its subcellular location is the cell outer membrane. The enzyme catalyses nitric oxide + Fe(III)-[cytochrome c] + H2O = Fe(II)-[cytochrome c] + nitrite + 2 H(+). Functionally, catalyzes the reduction of nitrite to nitric oxide (NO), probably with azurin as electron donor. Essential for growth and survival in oxygen-depleted environments. Can also provide protection against killing by normal human sera. This Neisseria gonorrhoeae protein is Copper-containing nitrite reductase (aniA).